The following is a 585-amino-acid chain: A-type ATP synthase subunit A (585 aa).

235–242 (GPFGSGKT) contributes to the ATP binding site.

The protein belongs to the ATPase alpha/beta chains family. Has multiple subunits with at least A(3), B(3), C, D, E, F, H, I and proteolipid K(x).

The protein resides in the cell membrane. It carries out the reaction ATP + H2O + 4 H(+)(in) = ADP + phosphate + 5 H(+)(out). Its function is as follows. Component of the A-type ATP synthase that produces ATP from ADP in the presence of a proton gradient across the membrane. The A chain is the catalytic subunit. The sequence is that of A-type ATP synthase subunit A from Halobacterium salinarum (strain ATCC 29341 / DSM 671 / R1).